A 328-amino-acid polypeptide reads, in one-letter code: DNA-directed RNA polymerase subunit alpha (328 aa).

Positions 1 to 231 are alpha N-terminal domain (alpha-NTD); it reads MIYQMQMPAK…EHVAFFADFS (231 aa). The tract at residues 252 to 328 is alpha C-terminal domain (alpha-CTD); it reads MRKLLNTKIE…MDITKYQMKG (77 aa).

This sequence belongs to the RNA polymerase alpha chain family. In terms of assembly, homodimer. The RNAP catalytic core consists of 2 alpha, 1 beta, 1 beta' and 1 omega subunit. When a sigma factor is associated with the core the holoenzyme is formed, which can initiate transcription.

It carries out the reaction RNA(n) + a ribonucleoside 5'-triphosphate = RNA(n+1) + diphosphate. In terms of biological role, DNA-dependent RNA polymerase catalyzes the transcription of DNA into RNA using the four ribonucleoside triphosphates as substrates. The sequence is that of DNA-directed RNA polymerase subunit alpha from Chlorobium phaeovibrioides (strain DSM 265 / 1930) (Prosthecochloris vibrioformis (strain DSM 265)).